The following is a 525-amino-acid chain: Sodium-dependent lysophosphatidylcholine symporter 1 (525 aa).

Residues 1-29 (MEKESENASCAGLLGQKNEPGSPTQSRSG) are disordered. Residues 1 to 32 (MEKESENASCAGLLGQKNEPGSPTQSRSGKHK) are Cytoplasmic-facing. The chain crosses the membrane as a helical span at residues 33–62 (LSVCSKICFAIGGAPYQITGCALGFFLQIF). Topologically, residues 63–73 (LLDIAQVPPFY) are extracellular. A helical transmembrane segment spans residues 74–94 (ASIILFSGRVWDAITDPLVGF). The Cytoplasmic portion of the chain corresponds to 95–106 (FVSKSSWTRLGR). Residues 107 to 126 (LLPWVVFSTPFAVVSYLLIW) form a helical membrane-spanning segment. Topologically, residues 127 to 137 (FVPGFSGVSMV) are extracellular. The helical transmembrane segment at 138–162 (IWYLVFYCLFQTLVTCFHVPYSALT) threads the bilayer. Residues 163 to 169 (MFISKEQ) lie on the Cytoplasmic side of the membrane. Residues 170–201 (SDRDSATGYRMTVEVLGTVLGTAIQGQIVGRE) traverse the membrane as a helical segment. Residues 202-226 (NTPCVEHIRETHLYNTSVIMEDLNI) are Extracellular-facing. An intrachain disulfide couples Cys-205 to Cys-458. Residues Asn-216 and Asn-225 are each glycosylated (N-linked (GlcNAc...) asparagine). A helical transmembrane segment spans residues 227–260 (THDVESLSSTRDAYMIAAGVICAIYVLCAIILTL). The Cytoplasmic portion of the chain corresponds to 261 to 291 (GVREKRDAYELLSDQPFSFWQGLKLVMSHKP). The helical transmembrane segment at 292–318 (YIKLITGFLFTSLAFMLLEGNFALFLT) threads the bilayer. The Extracellular segment spans residues 319-329 (YTMGFRRDFQN). Residues 330–348 (ILLVVMLSATLTVPFWQWF) traverse the membrane as a helical segment. Residues 349-352 (LTRF) lie on the Cytoplasmic side of the membrane. The chain crosses the membrane as a helical span at residues 353-374 (GKKTAVYFGISSVIPFLILVVL). Over 375 to 377 (MES) the chain is Extracellular. A helical transmembrane segment spans residues 378–414 (NLILAYVVAVAAGLSVAAAFLLPWSMLPDVIDDFILK). Residues 415 to 424 (NPDSHGHEPI) are Cytoplasmic-facing. Residues 425-451 (FFSFYVFFTKFASGVSLGISTLSLDFA) form a helical membrane-spanning segment. Residues 452–463 (GYQTRACSQPEQ) are Extracellular-facing. A helical membrane pass occupies residues 464-487 (VNLTLKMLICVAPVILILLGLLLF). Over 488 to 525 (ILYPINEEKRKQNKKALQLIRESNRDSDSDSLELASNV) the chain is Cytoplasmic.

Belongs to the major facilitator superfamily.

It is found in the cell membrane. Its subcellular location is the endoplasmic reticulum membrane. The catalysed reaction is a 1-acyl-sn-glycero-3-phosphocholine(in) + Na(+)(in) = a 1-acyl-sn-glycero-3-phosphocholine(out) + Na(+)(out). It carries out the reaction 1-(4Z,7Z,10Z,13Z,16Z,19Z-docosahexaenoyl)-sn-glycero-3-phosphocholine(in) + Na(+)(in) = 1-(4Z,7Z,10Z,13Z,16Z,19Z-docosahexaenoyl)-sn-glycero-3-phosphocholine(out) + Na(+)(out). It catalyses the reaction 1-(9Z-octadecenoyl)-sn-glycero-3-phosphocholine(in) + Na(+)(in) = 1-(9Z-octadecenoyl)-sn-glycero-3-phosphocholine(out) + Na(+)(out). The enzyme catalyses 1-hexadecanoyl-sn-glycero-3-phosphocholine(in) + Na(+)(in) = 1-hexadecanoyl-sn-glycero-3-phosphocholine(out) + Na(+)(out). The catalysed reaction is a 1-acyl-sn-glycero-3-phosphoethanolamine(in) + Na(+)(in) = a 1-acyl-sn-glycero-3-phosphoethanolamine(out) + Na(+)(out). Its function is as follows. Sodium-dependent lysophosphatidylcholine (LPC) symporter, which plays an essential role for blood-brain barrier formation and function. Specifically expressed in endothelium of the blood-brain barrier of micro-vessels and transports LPC into the brain. Transport of LPC is essential because it constitutes the major mechanism by which docosahexaenoic acid (DHA), an omega-3 fatty acid that is essential for normal brain growth and cognitive function, enters the brain. Transports LPC carrying long-chain fatty acids such LPC oleate and LPC palmitate with a minimum acyl chain length of 14 carbons. Does not transport docosahexaenoic acid in unesterified fatty acid. In Xenopus tropicalis (Western clawed frog), this protein is Sodium-dependent lysophosphatidylcholine symporter 1 (mfsd2a).